The sequence spans 310 residues: Glutamyl-Q tRNA(Asp) synthetase (310 aa).

L-glutamate contacts are provided by residues 8–12 and glutamate 44; that span reads RFAPS. Residues 11–21 carry the 'HIGH' region motif; that stretch reads PSPTGPLHLGS. Zn(2+) is bound by residues cysteine 100, cysteine 102, tyrosine 123, and cysteine 127. Tyrosine 183 and arginine 201 together coordinate L-glutamate. A 'KMSKS' region motif is present at residues 239–243; that stretch reads KLSKQ. Lysine 242 is an ATP binding site.

This sequence belongs to the class-I aminoacyl-tRNA synthetase family. GluQ subfamily. Requires Zn(2+) as cofactor.

Its function is as follows. Catalyzes the tRNA-independent activation of glutamate in presence of ATP and the subsequent transfer of glutamate onto a tRNA(Asp). Glutamate is transferred on the 2-amino-5-(4,5-dihydroxy-2-cyclopenten-1-yl) moiety of the queuosine in the wobble position of the QUC anticodon. In Cupriavidus metallidurans (strain ATCC 43123 / DSM 2839 / NBRC 102507 / CH34) (Ralstonia metallidurans), this protein is Glutamyl-Q tRNA(Asp) synthetase.